A 337-amino-acid polypeptide reads, in one-letter code: Ketol-acid reductoisomerase (NAD(P)(+)) (337 aa).

A KARI N-terminal Rossmann domain is found at 2–187 (ARMFYDADAN…GCTRAGVIET (186 aa)). Residues 25 to 28 (FGSQ), Arg-48, and 88 to 91 (DEVQ) contribute to the NADP(+) site. His-113 is a catalytic residue. Position 139 (Gly-139) interacts with NADP(+). The region spanning 188-333 (SFQEETETDL…AELRGMMPWL (146 aa)) is the KARI C-terminal knotted domain. 4 residues coordinate Mg(2+): Asp-196, Glu-200, Glu-232, and Glu-236. Ser-257 provides a ligand contact to substrate.

Belongs to the ketol-acid reductoisomerase family. Requires Mg(2+) as cofactor.

The enzyme catalyses (2R)-2,3-dihydroxy-3-methylbutanoate + NAD(+) = (2S)-2-acetolactate + NADH + H(+). The catalysed reaction is (2R)-2,3-dihydroxy-3-methylbutanoate + NADP(+) = (2S)-2-acetolactate + NADPH + H(+). It functions in the pathway amino-acid biosynthesis; L-isoleucine biosynthesis; L-isoleucine from 2-oxobutanoate: step 2/4. The protein operates within amino-acid biosynthesis; L-valine biosynthesis; L-valine from pyruvate: step 2/4. In terms of biological role, involved in the biosynthesis of branched-chain amino acids (BCAA). Catalyzes an alkyl-migration followed by a ketol-acid reduction of (S)-2-acetolactate (S2AL) to yield (R)-2,3-dihydroxy-isovalerate. In the isomerase reaction, S2AL is rearranged via a Mg-dependent methyl migration to produce 3-hydroxy-3-methyl-2-ketobutyrate (HMKB). In the reductase reaction, this 2-ketoacid undergoes a metal-dependent reduction by NADPH or NADH to yield (R)-2,3-dihydroxy-isovalerate. The protein is Ketol-acid reductoisomerase (NAD(P)(+)) of Syntrophomonas wolfei subsp. wolfei (strain DSM 2245B / Goettingen).